Reading from the N-terminus, the 418-residue chain is Light-independent protochlorophyllide reductase subunit N (418 aa).

Positions 17, 42, and 103 each coordinate [4Fe-4S] cluster.

Belongs to the BchN/ChlN family. Protochlorophyllide reductase is composed of three subunits; ChlL, ChlN and ChlB. Forms a heterotetramer of two ChlB and two ChlN subunits. It depends on [4Fe-4S] cluster as a cofactor.

The catalysed reaction is chlorophyllide a + oxidized 2[4Fe-4S]-[ferredoxin] + 2 ADP + 2 phosphate = protochlorophyllide a + reduced 2[4Fe-4S]-[ferredoxin] + 2 ATP + 2 H2O. Its pathway is porphyrin-containing compound metabolism; chlorophyll biosynthesis (light-independent). In terms of biological role, component of the dark-operative protochlorophyllide reductase (DPOR) that uses Mg-ATP and reduced ferredoxin to reduce ring D of protochlorophyllide (Pchlide) to form chlorophyllide a (Chlide). This reaction is light-independent. The NB-protein (ChlN-ChlB) is the catalytic component of the complex. The protein is Light-independent protochlorophyllide reductase subunit N of Prochlorococcus marinus subsp. pastoris (strain CCMP1986 / NIES-2087 / MED4).